Consider the following 368-residue polypeptide: Dihydroorotate dehydrogenase (quinone) (368 aa).

Residues 67-71 (AGFDK) and T91 contribute to the FMN site. A substrate-binding site is contributed by K71. 116-120 (NRMGF) contributes to the substrate binding site. Positions 146 and 179 each coordinate FMN. N179 is a substrate binding site. The active-site Nucleophile is S182. A substrate-binding site is contributed by N184. FMN contacts are provided by K222 and T250. Residue 251–252 (NT) participates in substrate binding. FMN contacts are provided by residues G276, G305, and 326–327 (YS).

The protein belongs to the dihydroorotate dehydrogenase family. Type 2 subfamily. As to quaternary structure, monomer. FMN is required as a cofactor.

It is found in the cell membrane. It carries out the reaction (S)-dihydroorotate + a quinone = orotate + a quinol. It functions in the pathway pyrimidine metabolism; UMP biosynthesis via de novo pathway; orotate from (S)-dihydroorotate (quinone route): step 1/1. In terms of biological role, catalyzes the conversion of dihydroorotate to orotate with quinone as electron acceptor. This Streptomyces coelicolor (strain ATCC BAA-471 / A3(2) / M145) protein is Dihydroorotate dehydrogenase (quinone).